The chain runs to 196 residues: Dimiconin (196 aa).

Positions 1–21 (MKTIIVVTIFGILTCAYPTDG) are cleaved as a signal peptide. Residues Asn62 and Asn187 are each glycosylated (N-linked (GlcNAc...) asparagine).

Belongs to the calycin superfamily. Triabin family. Salivary gland.

The protein resides in the secreted. Its function is as follows. Inhibits the intrinsic blood coagulation pathway by blocking the activation of host coagulation factor XII (F12) but not the enzymatic activity of activated F12. The protein is Dimiconin of Triatoma dimidiata (Kissing bug).